The following is a 39-amino-acid chain: Photosystem II reaction center protein X (39 aa).

A helical membrane pass occupies residues S11–S31.

It belongs to the PsbX family. Type 1 subfamily. As to quaternary structure, PSII is composed of 1 copy each of membrane proteins PsbA, PsbB, PsbC, PsbD, PsbE, PsbF, PsbH, PsbI, PsbJ, PsbK, PsbL, PsbM, PsbT, PsbX, PsbY, PsbZ, Psb30/Ycf12, at least 3 peripheral proteins of the oxygen-evolving complex and a large number of cofactors. It forms dimeric complexes.

The protein resides in the plastid. The protein localises to the cyanelle thylakoid membrane. In terms of biological role, involved in the binding and/or turnover of quinones at the Q(B) site of photosystem II (PSII). PSII is a light-driven water plastoquinone oxidoreductase, using light energy to abstract electrons from H(2)O, generating a proton gradient subsequently used for ATP formation. The protein is Photosystem II reaction center protein X of Cyanophora paradoxa.